Reading from the N-terminus, the 146-residue chain is Cytochrome c oxidase subunit 5A, mitochondrial (146 aa).

The transit peptide at 1–37 directs the protein to the mitochondrion; the sequence is MLAAALRRCTAAAAARGLLHPVSAPSPAAAVCSIRCY. The short motif at 2-16 is the SIFI-degron element; that stretch reads LAAALRRCTAAAAAR. N6-acetyllysine is present on residues Lys83 and Lys109. Thr137 carries the phosphothreonine modification.

In terms of assembly, component of the cytochrome c oxidase (complex IV, CIV), a multisubunit enzyme composed of 14 subunits. The complex is composed of a catalytic core of 3 subunits MT-CO1, MT-CO2 and MT-CO3, encoded in the mitochondrial DNA, and 11 supernumerary subunits COX4I, COX5A, COX5B, COX6A, COX6B, COX6C, COX7A, COX7B, COX7C, COX8 and NDUFA4, which are encoded in the nuclear genome. The complex exists as a monomer or a dimer and forms supercomplexes (SCs) in the inner mitochondrial membrane with NADH-ubiquinone oxidoreductase (complex I, CI) and ubiquinol-cytochrome c oxidoreductase (cytochrome b-c1 complex, complex III, CIII), resulting in different assemblies (supercomplex SCI(1)III(2)IV(1) and megacomplex MCI(2)III(2)IV(2)). Interacts with AFG1L. Interacts with RAB5IF. In response to mitochondrial stress, the precursor protein is ubiquitinated by the SIFI complex in the cytoplasm before mitochondrial import, leading to its degradation. Within the SIFI complex, UBR4 initiates ubiquitin chain that are further elongated or branched by KCMF1. Expressed in the head of epididymal sperm but not in testicular sperm (at protein level).

Its subcellular location is the mitochondrion inner membrane. The protein operates within energy metabolism; oxidative phosphorylation. Functionally, component of the cytochrome c oxidase, the last enzyme in the mitochondrial electron transport chain which drives oxidative phosphorylation. The respiratory chain contains 3 multisubunit complexes succinate dehydrogenase (complex II, CII), ubiquinol-cytochrome c oxidoreductase (cytochrome b-c1 complex, complex III, CIII) and cytochrome c oxidase (complex IV, CIV), that cooperate to transfer electrons derived from NADH and succinate to molecular oxygen, creating an electrochemical gradient over the inner membrane that drives transmembrane transport and the ATP synthase. Cytochrome c oxidase is the component of the respiratory chain that catalyzes the reduction of oxygen to water. Electrons originating from reduced cytochrome c in the intermembrane space (IMS) are transferred via the dinuclear copper A center (CU(A)) of subunit 2 and heme A of subunit 1 to the active site in subunit 1, a binuclear center (BNC) formed by heme A3 and copper B (CU(B)). The BNC reduces molecular oxygen to 2 water molecules using 4 electrons from cytochrome c in the IMS and 4 protons from the mitochondrial matrix. This chain is Cytochrome c oxidase subunit 5A, mitochondrial (Cox5a), found in Rattus norvegicus (Rat).